Here is a 619-residue protein sequence, read N- to C-terminus: Probable Xaa-Pro aminopeptidase P (619 aa).

Residues D416, D427, E525, and E539 each contribute to the Mn(2+) site.

Belongs to the peptidase M24B family. It depends on Mn(2+) as a cofactor.

The enzyme catalyses Release of any N-terminal amino acid, including proline, that is linked to proline, even from a dipeptide or tripeptide.. Catalyzes the removal of a penultimate prolyl residue from the N-termini of peptides. This chain is Probable Xaa-Pro aminopeptidase P (AMPP), found in Tuber melanosporum (strain Mel28) (Perigord black truffle).